Here is a 63-residue protein sequence, read N- to C-terminus: uncharacterized protein (63 aa).

A compositionally biased stretch (basic and acidic residues) spans 1-17 (MRYTDSRKLTPETDANH). Residues 1–32 (MRYTDSRKLTPETDANHKTASPQPIRRISSQT) are disordered. Polar residues predominate over residues 18–32 (KTASPQPIRRISSQT).

The protein to Y.enterocolitica HemP.

This is an uncharacterized protein from Escherichia coli (strain K12).